The primary structure comprises 173 residues: Mesencephalic astrocyte-derived neurotrophic factor homolog (173 aa).

Residues 1–22 form the signal peptide; that stretch reads MKTTHLVLVLCFLAGVAQTTLA. Intrachain disulfides connect cysteine 28–cysteine 114, cysteine 31–cysteine 103, cysteine 61–cysteine 72, and cysteine 148–cysteine 151.

It belongs to the ARMET family.

The protein resides in the secreted. Its function is as follows. Required during the maturation of the embryonic nervous system for maintenance of neuronal and cuticular connectivity. Essential for maintenance of dopaminergic neurons and dopamine levels. The sequence is that of Mesencephalic astrocyte-derived neurotrophic factor homolog from Drosophila persimilis (Fruit fly).